The following is a 414-amino-acid chain: WW domain-containing oxidoreductase (414 aa).

The interval 1-23 is disordered; the sequence is MAALRYAGLDDTDSEDELPPGWE. Position 12 is a phosphothreonine (Thr12). Residue Ser14 is modified to Phosphoserine. A WW 1 domain is found at 16–49; it reads DELPPGWEERTTKDGWVYYANHTEEKTQWEHPKT. Tyr33 is subject to Phosphotyrosine. Residues 50 to 55 carry the Nuclear localization signal motif; that stretch reads GKRKRV. In terms of domain architecture, WW 2 spans 57–90; the sequence is GDLPYGWEQETDENGQVFFVDHINKRTTYLDPRL. An interaction with MAPT region spans residues 125 to 414; sequence KVVVVTGANS…IQERLGSQSG (290 aa). 131-137 lines the NADP(+) pocket; sequence GANSGIG. Positions 209-273 are mediates targeting to the mitochondria; that stretch reads CNAATFALPW…RFTDINDSLG (65 aa). Ser260 is a binding site for substrate. The residue at position 287 (Tyr287) is a Phosphotyrosine; by TNK2. The Proton acceptor role is filled by Tyr293.

The protein belongs to the short-chain dehydrogenases/reductases (SDR) family. In terms of assembly, interacts with TP53, p73/TP73 and MAPK8. Interacts with MAPT/TAU, RUNX2 and HYAL2. Forms a ternary complex with TP53 and MDM2. Interacts with ERBB4, LITAF and WBP1. Interacts with DVL1, DVL2 and DVL3. May interact with FAM189B and SCOTIN. Interacts with TNK2. Interacts with TMEM207. Interacts (via WW domain) with VOPP1. Post-translationally, phosphorylated upon genotoxic stress. Phosphorylation of Tyr-33 regulates interaction with TP53, TP73 and MAPK8. May also regulate proapoptotic activity. Phosphorylation by TNK2 is associated with polyubiquitination and degradation. In terms of processing, ubiquitinated when phosphorylated by TNK2, leading to its degradation. Widely expressed. Strongly expressed in testis, prostate, and ovary. Overexpressed in cancer cell lines. Isoform 5 and isoform 6 may only be expressed in tumor cell lines.

It localises to the cytoplasm. It is found in the nucleus. Its subcellular location is the mitochondrion. The protein resides in the golgi apparatus. The protein localises to the lysosome. Functionally, putative oxidoreductase. Acts as a tumor suppressor and plays a role in apoptosis. Required for normal bone development. May function synergistically with p53/TP53 to control genotoxic stress-induced cell death. Plays a role in TGFB1 signaling and TGFB1-mediated cell death. May also play a role in tumor necrosis factor (TNF)-mediated cell death. Inhibits Wnt signaling, probably by sequestering DVL2 in the cytoplasm. This Homo sapiens (Human) protein is WW domain-containing oxidoreductase (WWOX).